We begin with the raw amino-acid sequence, 409 residues long: Serine/threonine transporter SstT (409 aa).

A run of 9 helical transmembrane segments spans residues Leu-17–Ala-37, Phe-49–Ile-69, Ile-83–Phe-103, Ala-142–Phe-162, Val-180–Ala-200, Leu-218–Phe-238, Gly-301–Val-321, Val-331–Ile-351, and Leu-357–Ile-377.

The protein belongs to the dicarboxylate/amino acid:cation symporter (DAACS) (TC 2.A.23) family.

Its subcellular location is the cell inner membrane. It carries out the reaction L-serine(in) + Na(+)(in) = L-serine(out) + Na(+)(out). It catalyses the reaction L-threonine(in) + Na(+)(in) = L-threonine(out) + Na(+)(out). In terms of biological role, involved in the import of serine and threonine into the cell, with the concomitant import of sodium (symport system). This Pseudomonas aeruginosa (strain UCBPP-PA14) protein is Serine/threonine transporter SstT.